Consider the following 500-residue polypeptide: Lysine--tRNA ligase (500 aa).

Mg(2+) contacts are provided by glutamate 410 and glutamate 417.

This sequence belongs to the class-II aminoacyl-tRNA synthetase family. Homodimer. Requires Mg(2+) as cofactor.

Its subcellular location is the cytoplasm. The catalysed reaction is tRNA(Lys) + L-lysine + ATP = L-lysyl-tRNA(Lys) + AMP + diphosphate. This chain is Lysine--tRNA ligase, found in Shewanella denitrificans (strain OS217 / ATCC BAA-1090 / DSM 15013).